Consider the following 270-residue polypeptide: Formamidopyrimidine-DNA glycosylase (270 aa).

P2 serves as the catalytic Schiff-base intermediate with DNA. E3 (proton donor) is an active-site residue. K58 acts as the Proton donor; for beta-elimination activity in catalysis. 3 residues coordinate DNA: H91, R110, and R151. The segment at F236–R270 adopts an FPG-type zinc-finger fold. The active-site Proton donor; for delta-elimination activity is the R260.

It belongs to the FPG family. As to quaternary structure, monomer. The cofactor is Zn(2+).

It catalyses the reaction Hydrolysis of DNA containing ring-opened 7-methylguanine residues, releasing 2,6-diamino-4-hydroxy-5-(N-methyl)formamidopyrimidine.. The catalysed reaction is 2'-deoxyribonucleotide-(2'-deoxyribose 5'-phosphate)-2'-deoxyribonucleotide-DNA = a 3'-end 2'-deoxyribonucleotide-(2,3-dehydro-2,3-deoxyribose 5'-phosphate)-DNA + a 5'-end 5'-phospho-2'-deoxyribonucleoside-DNA + H(+). Its function is as follows. Involved in base excision repair of DNA damaged by oxidation or by mutagenic agents. Acts as a DNA glycosylase that recognizes and removes damaged bases. Has a preference for oxidized purines, such as 7,8-dihydro-8-oxoguanine (8-oxoG). Has AP (apurinic/apyrimidinic) lyase activity and introduces nicks in the DNA strand. Cleaves the DNA backbone by beta-delta elimination to generate a single-strand break at the site of the removed base with both 3'- and 5'-phosphates. The sequence is that of Formamidopyrimidine-DNA glycosylase from Pseudomonas putida (strain W619).